Reading from the N-terminus, the 105-residue chain is UPF0145 protein AHA_2580 (105 aa).

It belongs to the UPF0145 family.

The sequence is that of UPF0145 protein AHA_2580 from Aeromonas hydrophila subsp. hydrophila (strain ATCC 7966 / DSM 30187 / BCRC 13018 / CCUG 14551 / JCM 1027 / KCTC 2358 / NCIMB 9240 / NCTC 8049).